A 223-amino-acid chain; its full sequence is Endonuclease V (223 aa).

2 residues coordinate Mg(2+): D35 and D103.

The protein belongs to the endonuclease V family. Requires Mg(2+) as cofactor.

It localises to the cytoplasm. It catalyses the reaction Endonucleolytic cleavage at apurinic or apyrimidinic sites to products with a 5'-phosphate.. In terms of biological role, DNA repair enzyme involved in the repair of deaminated bases. Selectively cleaves double-stranded DNA at the second phosphodiester bond 3' to a deoxyinosine leaving behind the intact lesion on the nicked DNA. The sequence is that of Endonuclease V from Salmonella schwarzengrund (strain CVM19633).